Consider the following 290-residue polypeptide: Arylamine N-acetyltransferase, pineal gland isozyme NAT-3 (290 aa).

The active-site Acyl-thioester intermediate is C68. Active-site residues include H107 and D122.

It belongs to the arylamine N-acetyltransferase family.

The enzyme catalyses an arylamine + acetyl-CoA = an N-acetylarylamine + CoA. The catalysed reaction is an N-hydroxyarylamine + acetyl-CoA = an N-acetoxyarylamine + CoA. Catalyzes the N- or O-acetylation of various arylamine and heterocyclic amine substrates, and participates in the detoxification of a plethora of hydrazine and arylamine drugs. This Gallus gallus (Chicken) protein is Arylamine N-acetyltransferase, pineal gland isozyme NAT-3.